Consider the following 94-residue polypeptide: NADH dehydrogenase [ubiquinone] iron-sulfur protein 3, mitochondrial (94 aa).

Belongs to the complex I 30 kDa subunit family. In terms of assembly, core subunit of respiratory chain NADH dehydrogenase (Complex I) which is composed of 45 different subunits. Interacts with NDUFAF3. Interacts with RAB5IF. Found in subcomplexes containing subunits NDUFS2, MT-ND1 and NDUFA13.

The protein resides in the mitochondrion inner membrane. It carries out the reaction a ubiquinone + NADH + 5 H(+)(in) = a ubiquinol + NAD(+) + 4 H(+)(out). Functionally, core subunit of the mitochondrial membrane respiratory chain NADH dehydrogenase (Complex I) which catalyzes electron transfer from NADH through the respiratory chain, using ubiquinone as an electron acceptor. Essential for the catalytic activity and assembly of complex I. The protein is NADH dehydrogenase [ubiquinone] iron-sulfur protein 3, mitochondrial of Mesocricetus auratus (Golden hamster).